The primary structure comprises 441 residues: Phenylalanine-4-hydroxylase (441 aa).

Positions 23-102 (FSISKGSDKI…KATTLQESSN (80 aa)) constitute an ACT domain. Fe cation-binding residues include His-273, His-278, and Glu-318.

It belongs to the biopterin-dependent aromatic amino acid hydroxylase family. In terms of assembly, homotetramer. Fe(2+) serves as cofactor.

It catalyses the reaction (6R)-L-erythro-5,6,7,8-tetrahydrobiopterin + L-phenylalanine + O2 = (4aS,6R)-4a-hydroxy-L-erythro-5,6,7,8-tetrahydrobiopterin + L-tyrosine. The catalysed reaction is (6R)-L-erythro-5,6,7,8-tetrahydrobiopterin + L-tryptophan + O2 = 5-hydroxy-L-tryptophan + (4aS,6R)-4a-hydroxy-L-erythro-5,6,7,8-tetrahydrobiopterin. The protein operates within amino-acid degradation; L-phenylalanine degradation; acetoacetate and fumarate from L-phenylalanine: step 1/6. Catalyzes the hydroxylation of L-phenylalanine. Hydroxylates L-tryptophan to 5-hydroxy-L-tryptophan but does not hydroxylate L-tyrosine to L-DOPA. It uses D-threo-tetrahydrodictyopterin (DH4), also known as dictyoperin, as a cofactor. This chain is Phenylalanine-4-hydroxylase (pah), found in Dictyostelium discoideum (Social amoeba).